Consider the following 261-residue polypeptide: Small ribosomal subunit protein eS4 (261 aa).

An S4 RNA-binding domain is found at 42 to 100 (LPLILILRNRLKYALTYREVVSILMQRHILVDGKIHFCIRLSDVVSIPKTNENFRLLYD).

This sequence belongs to the eukaryotic ribosomal protein eS4 family.

It localises to the cytoplasm. In Prunus armeniaca (Apricot), this protein is Small ribosomal subunit protein eS4 (RPS4).